The primary structure comprises 595 residues: Aspartate--tRNA(Asp/Asn) ligase (595 aa).

E174 serves as a coordination point for L-aspartate. Residues 198–201 (QLFK) form an aspartate region. An L-aspartate-binding site is contributed by R220. ATP contacts are provided by residues 220-222 (RDE) and Q229. H456 provides a ligand contact to L-aspartate. An ATP-binding site is contributed by E486. Position 493 (R493) interacts with L-aspartate. Residue 538-541 (GFDR) participates in ATP binding.

It belongs to the class-II aminoacyl-tRNA synthetase family. Type 1 subfamily. In terms of assembly, homodimer.

The protein resides in the cytoplasm. It catalyses the reaction tRNA(Asx) + L-aspartate + ATP = L-aspartyl-tRNA(Asx) + AMP + diphosphate. Its function is as follows. Aspartyl-tRNA synthetase with relaxed tRNA specificity since it is able to aspartylate not only its cognate tRNA(Asp) but also tRNA(Asn). Reaction proceeds in two steps: L-aspartate is first activated by ATP to form Asp-AMP and then transferred to the acceptor end of tRNA(Asp/Asn). This Gloeobacter violaceus (strain ATCC 29082 / PCC 7421) protein is Aspartate--tRNA(Asp/Asn) ligase.